The chain runs to 488 residues: Protein nucleotidyltransferase YdiU (488 aa).

ATP is bound by residues glycine 91, glycine 93, arginine 94, lysine 114, aspartate 126, glycine 127, arginine 177, and arginine 184. The active-site Proton acceptor is the aspartate 253. Mg(2+) is bound by residues asparagine 254 and aspartate 263. Aspartate 263 is a binding site for ATP.

This sequence belongs to the SELO family. Requires Mg(2+) as cofactor. Mn(2+) serves as cofactor.

It carries out the reaction L-seryl-[protein] + ATP = 3-O-(5'-adenylyl)-L-seryl-[protein] + diphosphate. The enzyme catalyses L-threonyl-[protein] + ATP = 3-O-(5'-adenylyl)-L-threonyl-[protein] + diphosphate. The catalysed reaction is L-tyrosyl-[protein] + ATP = O-(5'-adenylyl)-L-tyrosyl-[protein] + diphosphate. It catalyses the reaction L-histidyl-[protein] + UTP = N(tele)-(5'-uridylyl)-L-histidyl-[protein] + diphosphate. It carries out the reaction L-seryl-[protein] + UTP = O-(5'-uridylyl)-L-seryl-[protein] + diphosphate. The enzyme catalyses L-tyrosyl-[protein] + UTP = O-(5'-uridylyl)-L-tyrosyl-[protein] + diphosphate. Functionally, nucleotidyltransferase involved in the post-translational modification of proteins. It can catalyze the addition of adenosine monophosphate (AMP) or uridine monophosphate (UMP) to a protein, resulting in modifications known as AMPylation and UMPylation. The protein is Protein nucleotidyltransferase YdiU of Bacillus thuringiensis (strain Al Hakam).